The sequence spans 493 residues: GTPase Der (493 aa).

Residues 3–166 (PVIALVGRPN…EALGIFPKDN (164 aa)) form the EngA-type G 1 domain. GTP is bound by residues 9-16 (GRPNVGKS), 56-60 (DTGGI), and 118-121 (NKVD). The tract at residues 166 to 195 (NAEEEGEGEPASEEVAEGEEPTRIPGPSEK) is disordered. Positions 167 to 184 (AEEEGEGEPASEEVAEGE) are enriched in acidic residues. In terms of domain architecture, EngA-type G 2 spans 198 to 371 (IKIAIIGRPN…SVQESFRSAV (174 aa)). GTP contacts are provided by residues 204 to 211 (GRPNVGKS), 251 to 255 (DTAGV), and 316 to 319 (NKWD). In terms of domain architecture, KH-like spans 372-456 (TRWPTSRLTS…PIRIEYKGGE (85 aa)). A compositionally biased stretch (basic and acidic residues) spans 454-463 (GGENPYEGKK). The tract at residues 454–493 (GGENPYEGKKNSLTARQVNKKRRLMSHHKKAEKKKKDKRR) is disordered. Over residues 471-493 (VNKKRRLMSHHKKAEKKKKDKRR) the composition is skewed to basic residues.

This sequence belongs to the TRAFAC class TrmE-Era-EngA-EngB-Septin-like GTPase superfamily. EngA (Der) GTPase family. As to quaternary structure, associates with the 50S ribosomal subunit.

GTPase that plays an essential role in the late steps of ribosome biogenesis. This Pseudomonas aeruginosa (strain ATCC 15692 / DSM 22644 / CIP 104116 / JCM 14847 / LMG 12228 / 1C / PRS 101 / PAO1) protein is GTPase Der.